Reading from the N-terminus, the 238-residue chain is Pyridoxine 5'-phosphate synthase (238 aa).

Asn-9 contacts 3-amino-2-oxopropyl phosphate. Residue 11 to 12 (DH) coordinates 1-deoxy-D-xylulose 5-phosphate. Residue Arg-20 coordinates 3-amino-2-oxopropyl phosphate. His-45 functions as the Proton acceptor in the catalytic mechanism. Residues Arg-47 and His-52 each coordinate 1-deoxy-D-xylulose 5-phosphate. Glu-72 serves as the catalytic Proton acceptor. Thr-102 contributes to the 1-deoxy-D-xylulose 5-phosphate binding site. Residue His-189 is the Proton donor of the active site. 3-amino-2-oxopropyl phosphate contacts are provided by residues Gly-190 and 211 to 212 (GH).

The protein belongs to the PNP synthase family. In terms of assembly, homooctamer; tetramer of dimers.

The protein resides in the cytoplasm. It carries out the reaction 3-amino-2-oxopropyl phosphate + 1-deoxy-D-xylulose 5-phosphate = pyridoxine 5'-phosphate + phosphate + 2 H2O + H(+). Its pathway is cofactor biosynthesis; pyridoxine 5'-phosphate biosynthesis; pyridoxine 5'-phosphate from D-erythrose 4-phosphate: step 5/5. Functionally, catalyzes the complicated ring closure reaction between the two acyclic compounds 1-deoxy-D-xylulose-5-phosphate (DXP) and 3-amino-2-oxopropyl phosphate (1-amino-acetone-3-phosphate or AAP) to form pyridoxine 5'-phosphate (PNP) and inorganic phosphate. This Ehrlichia ruminantium (strain Gardel) protein is Pyridoxine 5'-phosphate synthase.